A 76-amino-acid chain; its full sequence is Small ribosomal subunit protein bS18 (76 aa).

It belongs to the bacterial ribosomal protein bS18 family. Part of the 30S ribosomal subunit. Forms a tight heterodimer with protein bS6.

Functionally, binds as a heterodimer with protein bS6 to the central domain of the 16S rRNA, where it helps stabilize the platform of the 30S subunit. This chain is Small ribosomal subunit protein bS18, found in Pelotomaculum thermopropionicum (strain DSM 13744 / JCM 10971 / SI).